Here is a 195-residue protein sequence, read N- to C-terminus: Sec-independent protein translocase protein TatB (195 aa).

A helical membrane pass occupies residues 1–21 (MFDIGFSELALIAVVALVVLG). Positions 130 to 195 (EPGSAQPHTP…SSTSPQEKTP (66 aa)) are disordered. Composition is skewed to low complexity over residues 145–157 (PVVA…APAP) and 175–195 (TTHA…EKTP).

This sequence belongs to the TatB family. In terms of assembly, the Tat system comprises two distinct complexes: a TatABC complex, containing multiple copies of TatA, TatB and TatC subunits, and a separate TatA complex, containing only TatA subunits. Substrates initially bind to the TatABC complex, which probably triggers association of the separate TatA complex to form the active translocon.

It localises to the cell inner membrane. In terms of biological role, part of the twin-arginine translocation (Tat) system that transports large folded proteins containing a characteristic twin-arginine motif in their signal peptide across membranes. Together with TatC, TatB is part of a receptor directly interacting with Tat signal peptides. TatB may form an oligomeric binding site that transiently accommodates folded Tat precursor proteins before their translocation. The sequence is that of Sec-independent protein translocase protein TatB from Xanthomonas campestris pv. campestris (strain 8004).